The sequence spans 388 residues: Succinate--CoA ligase [ADP-forming] subunit beta (388 aa).

Residues 9–244 enclose the ATP-grasp domain; that stretch reads KQLFAEYGLP…PSQEDEREAH (236 aa). ATP contacts are provided by residues Lys46, 53–55, Glu99, Thr102, and Glu107; that span reads GRG. Mg(2+) contacts are provided by Asn199 and Asp213. Residues Asn264 and 321–323 contribute to the substrate site; that span reads GIV.

It belongs to the succinate/malate CoA ligase beta subunit family. Heterotetramer of two alpha and two beta subunits. The cofactor is Mg(2+).

It carries out the reaction succinate + ATP + CoA = succinyl-CoA + ADP + phosphate. The enzyme catalyses GTP + succinate + CoA = succinyl-CoA + GDP + phosphate. Its pathway is carbohydrate metabolism; tricarboxylic acid cycle; succinate from succinyl-CoA (ligase route): step 1/1. In terms of biological role, succinyl-CoA synthetase functions in the citric acid cycle (TCA), coupling the hydrolysis of succinyl-CoA to the synthesis of either ATP or GTP and thus represents the only step of substrate-level phosphorylation in the TCA. The beta subunit provides nucleotide specificity of the enzyme and binds the substrate succinate, while the binding sites for coenzyme A and phosphate are found in the alpha subunit. This is Succinate--CoA ligase [ADP-forming] subunit beta from Saccharophagus degradans (strain 2-40 / ATCC 43961 / DSM 17024).